Reading from the N-terminus, the 135-residue chain is Large ribosomal subunit protein eL32 (135 aa).

It belongs to the eukaryotic ribosomal protein eL32 family.

This is Large ribosomal subunit protein eL32 from Methanococcus maripaludis (strain C7 / ATCC BAA-1331).